The sequence spans 121 residues: Large ribosomal subunit protein bL12 (121 aa).

The protein belongs to the bacterial ribosomal protein bL12 family. Homodimer. Part of the ribosomal stalk of the 50S ribosomal subunit. Forms a multimeric L10(L12)X complex, where L10 forms an elongated spine to which 2 to 4 L12 dimers bind in a sequential fashion. Binds GTP-bound translation factors.

Functionally, forms part of the ribosomal stalk which helps the ribosome interact with GTP-bound translation factors. Is thus essential for accurate translation. The protein is Large ribosomal subunit protein bL12 of Escherichia coli O45:K1 (strain S88 / ExPEC).